Reading from the N-terminus, the 302-residue chain is Dihydroorotate dehydrogenase B (NAD(+)), catalytic subunit (302 aa).

FMN is bound by residues Ser23 and 47–48 (KG). Substrate is bound by residues Lys47 and 71–75 (NSVGL). Residues Asn101 and Asn128 each coordinate FMN. Asn128 contributes to the substrate binding site. Cys131 acts as the Nucleophile in catalysis. The FMN site is built by Lys166 and Ile192. 193 to 194 (NT) contributes to the substrate binding site. FMN is bound by residues Gly218, 244-245 (GG), and 266-267 (GT).

The protein belongs to the dihydroorotate dehydrogenase family. Type 1 subfamily. In terms of assembly, heterotetramer of 2 PyrK and 2 PyrD type B subunits. Requires FMN as cofactor.

The protein resides in the cytoplasm. It carries out the reaction (S)-dihydroorotate + NAD(+) = orotate + NADH + H(+). The protein operates within pyrimidine metabolism; UMP biosynthesis via de novo pathway; orotate from (S)-dihydroorotate (NAD(+) route): step 1/1. Catalyzes the conversion of dihydroorotate to orotate with NAD(+) as electron acceptor. The protein is Dihydroorotate dehydrogenase B (NAD(+)), catalytic subunit (pyrD) of Alkaliphilus metalliredigens (strain QYMF).